A 112-amino-acid chain; its full sequence is Larval cuticle protein 3 (112 aa).

An N-terminal signal peptide occupies residues 1-16 (MFKILLVCSLAALVAA). A Chitin-binding type R&amp;R domain is found at 31 to 92 (PDGFVSKLVL…PQSDLLPTPP (62 aa)).

Component of the larval cuticle. The protein is Larval cuticle protein 3 (Lcp3) of Drosophila melanogaster (Fruit fly).